The following is a 365-amino-acid chain: UDP-N-acetylglucosamine--N-acetylmuramyl-(pentapeptide) pyrophosphoryl-undecaprenol N-acetylglucosamine transferase (365 aa).

Residues 10–12 (TGG), N128, R170, S199, I250, and Q295 contribute to the UDP-N-acetyl-alpha-D-glucosamine site.

The protein belongs to the glycosyltransferase 28 family. MurG subfamily.

It is found in the cell inner membrane. It catalyses the reaction di-trans,octa-cis-undecaprenyl diphospho-N-acetyl-alpha-D-muramoyl-L-alanyl-D-glutamyl-meso-2,6-diaminopimeloyl-D-alanyl-D-alanine + UDP-N-acetyl-alpha-D-glucosamine = di-trans,octa-cis-undecaprenyl diphospho-[N-acetyl-alpha-D-glucosaminyl-(1-&gt;4)]-N-acetyl-alpha-D-muramoyl-L-alanyl-D-glutamyl-meso-2,6-diaminopimeloyl-D-alanyl-D-alanine + UDP + H(+). It functions in the pathway cell wall biogenesis; peptidoglycan biosynthesis. In terms of biological role, cell wall formation. Catalyzes the transfer of a GlcNAc subunit on undecaprenyl-pyrophosphoryl-MurNAc-pentapeptide (lipid intermediate I) to form undecaprenyl-pyrophosphoryl-MurNAc-(pentapeptide)GlcNAc (lipid intermediate II). The protein is UDP-N-acetylglucosamine--N-acetylmuramyl-(pentapeptide) pyrophosphoryl-undecaprenol N-acetylglucosamine transferase of Prosthecochloris aestuarii (strain DSM 271 / SK 413).